A 234-amino-acid polypeptide reads, in one-letter code: UPF0758 protein Smlt0399 (234 aa).

One can recognise an MPN domain in the interval 103–225; sequence VGNNPAAVGR…PVSFAERGLL (123 aa). Zn(2+) is bound by residues histidine 174, histidine 176, and aspartate 187. A JAMM motif motif is present at residues 174 to 187; sequence HNHPSGDPEPSSAD.

It belongs to the UPF0758 family.

This chain is UPF0758 protein Smlt0399, found in Stenotrophomonas maltophilia (strain K279a).